The sequence spans 425 residues: Protein let-756 (425 aa).

Disordered stretches follow at residues 277–298 (LEEK…LRKE) and 314–425 (EEEL…QRYP). Positions 281 to 291 (KRRREKKKRRR) are enriched in basic residues. Over residues 329 to 340 (ASTQTRYNRPQN) the composition is skewed to polar residues. Residues 378 to 389 (HNSHHHHHHHPR) show a composition bias toward basic residues. Residues 395–425 (DPQQRHQSQQHYLAQTVSNPNRQNVNYQRYP) are compositionally biased toward polar residues.

It belongs to the heparin-binding growth factors family. Interacts with pal-1. Expressed in pharynx, CAN neuron and body wall muscles.

Its subcellular location is the nucleus. It localises to the membrane. Functionally, required for larval development. Probably by binding receptor egl-15, negatively regulates membrane protrusion from body wall muscles during larval development. This is Protein let-756 (let-756) from Caenorhabditis elegans.